A 78-amino-acid polypeptide reads, in one-letter code: Small ribosomal subunit protein bS21A (78 aa).

Residues 30–52 are compositionally biased toward basic and acidic residues; it reads MKARSAYEKPSEKRAREKGEAVR. The disordered stretch occupies residues 30–78; the sequence is MKARSAYEKPSEKRAREKGEAVRRQRKLARKKLQREGLLPAPKKAVRAR. Residues 53–62 are compositionally biased toward basic residues; it reads RQRKLARKKL.

Belongs to the bacterial ribosomal protein bS21 family.

This chain is Small ribosomal subunit protein bS21A, found in Rhizobium etli (strain ATCC 51251 / DSM 11541 / JCM 21823 / NBRC 15573 / CFN 42).